A 139-amino-acid chain; its full sequence is Hydrogenase maturation factor HypA (139 aa).

Ni(2+)-binding residues include Met1 and His2. Residues Cys73 and Cys76 each coordinate Zn(2+). Position 98 (His98) interacts with Ni(2+). Cys110 and Cys113 together coordinate Zn(2+).

It belongs to the HypA/HybF family. As to quaternary structure, monomer and homodimer. Could also form hexamers. Forms a complex with HypB.

Its function is as follows. Involved in the maturation of [NiFe] hydrogenases. Required for nickel insertion into the metal center of the hydrogenase. The chain is Hydrogenase maturation factor HypA from Thermococcus kodakarensis (strain ATCC BAA-918 / JCM 12380 / KOD1) (Pyrococcus kodakaraensis (strain KOD1)).